The primary structure comprises 223 residues: Small ribosomal subunit protein uS3 (223 aa).

Positions 39 to 117 (IREHLRKKPS…RPELNAKLVA (79 aa)) constitute a KH type-2 domain.

This sequence belongs to the universal ribosomal protein uS3 family. As to quaternary structure, part of the 30S ribosomal subunit. Forms a tight complex with proteins S10 and S14.

Binds the lower part of the 30S subunit head. Binds mRNA in the 70S ribosome, positioning it for translation. The sequence is that of Small ribosomal subunit protein uS3 from Chlamydia caviae (strain ATCC VR-813 / DSM 19441 / 03DC25 / GPIC) (Chlamydophila caviae).